A 401-amino-acid chain; its full sequence is Argininosuccinate synthase (401 aa).

Position 8-16 (8-16 (AYSGGLDTS)) interacts with ATP. Tyr-85 is a binding site for L-citrulline. Gly-115 is an ATP binding site. L-aspartate-binding residues include Thr-117, Asn-121, and Asp-122. Residue Asn-121 participates in L-citrulline binding. L-citrulline is bound by residues Arg-125, Ser-173, Ser-182, Glu-258, and Tyr-270.

The protein belongs to the argininosuccinate synthase family. Type 1 subfamily. In terms of assembly, homotetramer.

It is found in the cytoplasm. It carries out the reaction L-citrulline + L-aspartate + ATP = 2-(N(omega)-L-arginino)succinate + AMP + diphosphate + H(+). It functions in the pathway amino-acid biosynthesis; L-arginine biosynthesis; L-arginine from L-ornithine and carbamoyl phosphate: step 2/3. The protein is Argininosuccinate synthase of Staphylococcus saprophyticus subsp. saprophyticus (strain ATCC 15305 / DSM 20229 / NCIMB 8711 / NCTC 7292 / S-41).